Consider the following 123-residue polypeptide: Hydrogenase maturation factor HypA (123 aa).

Histidine 2 serves as a coordination point for Ni(2+). Cysteine 77, cysteine 80, cysteine 96, and cysteine 99 together coordinate Zn(2+).

It belongs to the HypA/HybF family.

Involved in the maturation of [NiFe] hydrogenases. Required for nickel insertion into the metal center of the hydrogenase. The polypeptide is Hydrogenase maturation factor HypA (Methanococcus aeolicus (strain ATCC BAA-1280 / DSM 17508 / OCM 812 / Nankai-3)).